A 414-amino-acid chain; its full sequence is Transposon Ty4-J Gag polyprotein (414 aa).

Residues 39–115 (RKVSIKDEQV…IQLLETNENN (77 aa)) are a coiled coil. The disordered stretch occupies residues 378-414 (GAQRQQPLKSSAKRTKVLEQDTKKVEQSVQQQKTGNY). The segment covering 393-403 (KVLEQDTKKVE) has biased composition (basic and acidic residues). A compositionally biased stretch (polar residues) spans 404-414 (QSVQQQKTGNY).

Functionally, capsid protein (CA) is the structural component of the virus-like particle (VLP), forming the shell that encapsulates the retrotransposons dimeric RNA genome. This chain is Transposon Ty4-J Gag polyprotein (TY4A-J), found in Saccharomyces cerevisiae (strain ATCC 204508 / S288c) (Baker's yeast).